Reading from the N-terminus, the 420-residue chain is Tyrosine--tRNA ligase (420 aa).

Tyr-33 serves as a coordination point for L-tyrosine. The 'HIGH' region motif lies at 38–47 (PTADSLHIGH). The L-tyrosine site is built by Tyr-168 and Gln-172. Residues 231–235 (KFGKT) carry the 'KMSKS' region motif. Lys-234 is an ATP binding site. Positions 353–419 (MLLVDALIKV…GKKNYYLVKL (67 aa)) constitute an S4 RNA-binding domain.

Belongs to the class-I aminoacyl-tRNA synthetase family. TyrS type 1 subfamily. In terms of assembly, homodimer.

The protein resides in the cytoplasm. It catalyses the reaction tRNA(Tyr) + L-tyrosine + ATP = L-tyrosyl-tRNA(Tyr) + AMP + diphosphate + H(+). In terms of biological role, catalyzes the attachment of tyrosine to tRNA(Tyr) in a two-step reaction: tyrosine is first activated by ATP to form Tyr-AMP and then transferred to the acceptor end of tRNA(Tyr). This Desulfitobacterium hafniense (strain Y51) protein is Tyrosine--tRNA ligase.